Reading from the N-terminus, the 124-residue chain is Fluoride-specific ion channel FluC (124 aa).

The next 4 helical transmembrane spans lie at 5–25, 36–56, 70–90, and 100–120; these read LVVF…NLAA, TMII…WFAV, TGIL…FLLM, and LYVL…LAVI. Residues G74 and T77 each coordinate Na(+).

Belongs to the fluoride channel Fluc/FEX (TC 1.A.43) family.

It is found in the cell inner membrane. The enzyme catalyses fluoride(in) = fluoride(out). Its activity is regulated as follows. Na(+) is not transported, but it plays an essential structural role and its presence is essential for fluoride channel function. Fluoride-specific ion channel. Important for reducing fluoride concentration in the cell, thus reducing its toxicity. This chain is Fluoride-specific ion channel FluC, found in Methylobacterium nodulans (strain LMG 21967 / CNCM I-2342 / ORS 2060).